Consider the following 367-residue polypeptide: Developmentally-regulated GTP-binding protein 1 (367 aa).

Ser2 is modified (N-acetylserine). Residues Ser2 to Ala16 form a required for interaction with STK16 region. Residue Lys22 is modified to (3S)-3-hydroxylysine. Residues Ala65–Lys290 enclose the OBG-type G domain. Residues Gly71–Ser78, Phe96–Thr100, Asp117–Gly120, Asn248–Asp251, and Ser271–His273 each bind GTP. Mg(2+)-binding residues include Ser78 and Thr98. Residue Thr100 is modified to Phosphothreonine; by STK16. The TGS domain maps to Lys290–Lys366.

The protein belongs to the TRAFAC class OBG-HflX-like GTPase superfamily. OBG GTPase family. Interacts (via its C-terminal) with TAL1. Interacts with DFRP1/ZC3H15; this interaction prevents DRG1 poly-ubiquitination and degradation by proteasome. DRG1-ZC3H15/DFRP1 complex co-sediments with polysomes. Interacts with STK16. Interacts with JMJD7. Sumoylated by UBE2I in response to MEKK1-mediated stimuli. In terms of processing, hydroxylated (with S stereochemistry) at C-3 of Lys-22 by JMJD7. Post-translationally, phosphorylated at Thr-100 by STK16. Polyubiquitinated; this modification induces proteolytic degradation and is impaired by interaction with ZC3H15.

The protein resides in the nucleus. It is found in the cytoplasm. The catalysed reaction is GTP + H2O = GDP + phosphate + H(+). The GTPase activity is enhanced by potassium ions as well as by DFRP1 binding. Functionally, catalyzes the conversion of GTP to GDP through hydrolysis of the gamma-phosphate bond in GTP. Appears to have an intrinsic GTPase activity that is stimulated by ZC3H15/DFRP1 binding likely by increasing the affinity for the potassium ions. When hydroxylated at C-3 of 'Lys-22' by JMJD7, may bind to RNA and play a role in translation. Binds to microtubules and promotes microtubule polymerization and bundling that are required for mitotic spindle assembly during prophase to anaphase transition. GTPase activity is not necessary for these microtubule-related functions. The chain is Developmentally-regulated GTP-binding protein 1 (DRG1) from Bos taurus (Bovine).